Here is a 266-residue protein sequence, read N- to C-terminus: MNEKLPISIAQITDIHLLASESQRLQGISTTESFLAVMKRLEELRPELDLLLMTGDLSDDGTPESYENLQHYLNSLQIATYWLPGNHDCAIAMDKILNLGMVSRRKSFQRGNWNFILLNSSVTDCVYGYLSATTLDWLDSELKMLPNNPTLIALHHPPLSVNSAWIDRSCLQNSQELFAVIDRYPQVKLVLFGHIHQEFRRQRHNVHYLGSPSTCYQFQSQSTTFAINQELPGFRLLKLYADGTWTTKIERVPYSLPIEPTVTVSY.

Positions 14, 16, 56, 86, 155, 194, and 196 each coordinate Fe cation. AMP-binding positions include His-16, Asp-56, and 86–87 (NH). Residue His-196 participates in AMP binding.

This sequence belongs to the cyclic nucleotide phosphodiesterase class-III family. It depends on Fe(2+) as a cofactor. The cofactor is Mn(2+).

It carries out the reaction a nucleoside 3',5'-cyclic phosphate + H2O = a nucleoside 5'-phosphate + H(+). It catalyses the reaction 3',5'-cyclic AMP + H2O = AMP + H(+). The catalysed reaction is 3',5'-cyclic GMP + H2O = GMP + H(+). Activated by iron and manganese. In terms of biological role, hydrolyzes cAMP to 5'-AMP. Plays an important regulatory role in modulating the intracellular concentration of cAMP, thereby influencing cAMP-dependent processes. Can also hydrolyze cGMP. This is 3',5'-cyclic-nucleotide phosphodiesterase alr5338 from Nostoc sp. (strain PCC 7120 / SAG 25.82 / UTEX 2576).